A 278-amino-acid chain; its full sequence is Undecaprenyl-diphosphatase (278 aa).

A run of 6 helical transmembrane segments spans residues Ala-49 to Trp-69, His-97 to Asp-117, Leu-120 to Ala-140, Ala-197 to Val-217, Gly-226 to Ile-246, and Leu-258 to Met-278.

Belongs to the UppP family.

It localises to the cell membrane. The enzyme catalyses di-trans,octa-cis-undecaprenyl diphosphate + H2O = di-trans,octa-cis-undecaprenyl phosphate + phosphate + H(+). Catalyzes the dephosphorylation of undecaprenyl diphosphate (UPP). Confers resistance to bacitracin. The polypeptide is Undecaprenyl-diphosphatase (Exiguobacterium sibiricum (strain DSM 17290 / CCUG 55495 / CIP 109462 / JCM 13490 / 255-15)).